We begin with the raw amino-acid sequence, 568 residues long: Protein OCTOPUS-like (568 aa).

Disordered stretches follow at residues methionine 1–threonine 27, leucine 78–phenylalanine 99, glutamate 168–proline 203, glutamine 242–serine 276, proline 360–serine 428, aspartate 446–glycine 512, and arginine 526–histidine 558. Residues serine 82–glycine 93 are compositionally biased toward low complexity. The segment covering glutamate 168 to glycine 179 has biased composition (acidic residues). Residues glutamate 180 to glutamate 193 are compositionally biased toward basic and acidic residues. Phosphoserine is present on serine 260. The segment covering serine 400–asparagine 423 has biased composition (polar residues). A compositionally biased stretch (gly residues) spans glycine 532–tryptophan 546.

The protein belongs to the OCTOPUS family. Phosphorylation at Ser-260 amplifies the promotion of protophloem differentiation.

The protein localises to the cell membrane. The protein resides in the cytoplasm. In terms of biological role, potentiates primary root protophloem differentiation. Regulates roots architecture. This chain is Protein OCTOPUS-like, found in Arabidopsis thaliana (Mouse-ear cress).